We begin with the raw amino-acid sequence, 298 residues long: UDP-N-acetylenolpyruvoylglucosamine reductase (298 aa).

The 166-residue stretch at 26–191 (KTGGPADWLA…LDATFALEPG (166 aa)) folds into the FAD-binding PCMH-type domain. Residue Arg-170 is part of the active site. Ser-220 acts as the Proton donor in catalysis. Glu-290 is a catalytic residue.

It belongs to the MurB family. FAD serves as cofactor.

The protein localises to the cytoplasm. The enzyme catalyses UDP-N-acetyl-alpha-D-muramate + NADP(+) = UDP-N-acetyl-3-O-(1-carboxyvinyl)-alpha-D-glucosamine + NADPH + H(+). The protein operates within cell wall biogenesis; peptidoglycan biosynthesis. Its function is as follows. Cell wall formation. This Limosilactobacillus reuteri subsp. reuteri (strain JCM 1112) (Lactobacillus reuteri) protein is UDP-N-acetylenolpyruvoylglucosamine reductase.